The chain runs to 256 residues: 5-keto-4-deoxy-D-glucarate aldolase (256 aa).

Residue His-50 is the Proton acceptor of the active site. Residue Gln-151 coordinates substrate. Residue Glu-153 coordinates Mg(2+). Residues Ser-178 and Asp-179 each contribute to the substrate site. Asp-179 serves as a coordination point for Mg(2+).

The protein belongs to the HpcH/HpaI aldolase family. KDGluc aldolase subfamily. In terms of assembly, homohexamer; trimer of dimers. The cofactor is Mg(2+).

The catalysed reaction is 5-dehydro-4-deoxy-D-glucarate = 2-hydroxy-3-oxopropanoate + pyruvate. It carries out the reaction 2-dehydro-3-deoxy-D-glucarate = 2-hydroxy-3-oxopropanoate + pyruvate. The protein operates within carbohydrate acid metabolism; galactarate degradation; D-glycerate from galactarate: step 2/3. Functionally, catalyzes the reversible retro-aldol cleavage of both 5-keto-4-deoxy-D-glucarate and 2-keto-3-deoxy-D-glucarate to pyruvate and tartronic semialdehyde. The sequence is that of 5-keto-4-deoxy-D-glucarate aldolase from Escherichia coli O157:H7 (strain EC4115 / EHEC).